We begin with the raw amino-acid sequence, 663 residues long: RING finger protein 145 (663 aa).

Helical transmembrane passes span 53 to 73 (YLAL…LTLP), 77 to 97 (LVQL…HQIS), 123 to 143 (FTTA…VMKT), 146 to 166 (IWLF…VPLE), 168 to 188 (IVII…YFLG), 205 to 222 (LVQV…MSLW), 225 to 245 (LVVP…QIYS), 275 to 295 (YSLL…LTLC), 316 to 336 (TEGV…LQVV), 340 to 360 (FLLS…MLEI), 384 to 404 (SLCL…CQFF), 410 to 430 (LLII…TLFI), 460 to 480 (LLEF…TIFG), and 482 to 502 (WTVM…WLRA). Residues 81 to 84 (YLYF) carry the YLYF motif motif. The active site involves Cys537. The segment at 537–575 (CAICYQDMKSAVITPCSHFFHAGCLKKWLYVQETCPLCH) adopts an RING-type; atypical zinc-finger fold. A disordered region spans residues 607 to 663 (EGTEPPGQEHTPGTRIQEGSRDNNEYIARRPDNQEGAFDPKEYPHSAKDEAHPVESA). Over residues 624–663 (EGSRDNNEYIARRPDNQEGAFDPKEYPHSAKDEAHPVESA) the composition is skewed to basic and acidic residues.

Interacts (via YLYF motif) with INSIG1 and INSIG2.

Its subcellular location is the endoplasmic reticulum membrane. The catalysed reaction is S-ubiquitinyl-[E2 ubiquitin-conjugating enzyme]-L-cysteine + [acceptor protein]-L-lysine = [E2 ubiquitin-conjugating enzyme]-L-cysteine + N(6)-ubiquitinyl-[acceptor protein]-L-lysine.. Functionally, E3 ubiquitin ligase that catalyzes the direct transfer of ubiquitin from E2 ubiquitin-conjugating enzyme to a specific substrate. In response to bacterial infection, negatively regulates the phagocyte oxidative burst by controlling the turnover of the NADPH oxidase complex subunits. Promotes monoubiquitination of CYBA and 'Lys-48'-linked polyubiquitination and degradation of CYBB NADPH oxidase catalytic subunits, both essential for the generation of antimicrobial reactive oxygen species. Involved in the maintenance of cholesterol homeostasis. In response to high sterol concentrations ubiquitinates HMGCR, a rate-limiting enzyme in cholesterol biosynthesis, and targets it for degradation. The interaction with INSIG1 is required for this function. In addition, triggers ubiquitination of SCAP, likely inhibiting its transport to the Golgi apparatus and the subsequent processing/maturation of SREBPF2, ultimately down-regulating cholesterol biosynthesis. The sequence is that of RING finger protein 145 from Homo sapiens (Human).